The chain runs to 692 residues: Translation initiation factor IF-2 (692 aa).

A tr-type G domain is found at 194-363; that stretch reads PRPPIVTVMG…LLVAEMEDLK (170 aa). The segment at 203-210 is G1; the sequence is GHVDHGKT. 203-210 is a binding site for GTP; the sequence is GHVDHGKT. Residues 228–232 are G2; the sequence is GITQH. Positions 249 to 252 are G3; sequence DTPG. Residues 249–253 and 303–306 each bind GTP; these read DTPGH and NKID. The segment at 303–306 is G4; sequence NKID. The interval 339 to 341 is G5; it reads SAK.

This sequence belongs to the TRAFAC class translation factor GTPase superfamily. Classic translation factor GTPase family. IF-2 subfamily.

Its subcellular location is the cytoplasm. Its function is as follows. One of the essential components for the initiation of protein synthesis. Protects formylmethionyl-tRNA from spontaneous hydrolysis and promotes its binding to the 30S ribosomal subunits. Also involved in the hydrolysis of GTP during the formation of the 70S ribosomal complex. The sequence is that of Translation initiation factor IF-2 from Thermoanaerobacter sp. (strain X514).